The sequence spans 507 residues: MNLRPEEISSIIRQQIEKYEVQVEVTDVGTVIQIGDGVARVYGLEDCMYSELLEFPGGTLGMALNLEEDNIGCVILGSYLHIKEGDVVKRTGRIASVPVGEALIGRVVNPVGEPLDGKGPIKTDRFRPIEKIAHGVVFRSPVDTPLQTGIKAVDAMIPIGRGQRELIMGDRQTGKTAIAVDTIINQKGQDCICIYVAIGQKASTVANVIQKLHEEGAMDHTIVVVAGASDPSPLLYIAPFAGAAMGEEFMEAGKDVLVVYDDLSKQAAAYRELSLLLRRPPGREAYPGDVFNLHSRLLERAAKLHPNIGGGSMTALPVIETQQGDVSAYIPTNVISITDGQIILEPDLFYAGVRPAINVGLSVSRVGGKAQRTAMRQVAGQLRLDLAQYRELAAFAQFGSDLDRATRARLTRGERMVELLKQGQYNPMPLEEQVMSIYTGVRGYLDSLPADKVRDFEIEFLKYMRTEKPEIGEDIKVNQKITPENESKLKAAVEEFKQMFVTQHGLS.

169 to 176 (GDRQTGKT) contributes to the ATP binding site.

It belongs to the ATPase alpha/beta chains family. F-type ATPases have 2 components, CF(1) - the catalytic core - and CF(0) - the membrane proton channel. CF(1) has five subunits: alpha(3), beta(3), gamma(1), delta(1), epsilon(1). CF(0) has three main subunits: a(1), b(2) and c(9-12). The alpha and beta chains form an alternating ring which encloses part of the gamma chain. CF(1) is attached to CF(0) by a central stalk formed by the gamma and epsilon chains, while a peripheral stalk is formed by the delta and b chains.

It localises to the cell membrane. The catalysed reaction is ATP + H2O + 4 H(+)(in) = ADP + phosphate + 5 H(+)(out). Functionally, produces ATP from ADP in the presence of a proton gradient across the membrane. The alpha chain is a regulatory subunit. In Desulforudis audaxviator (strain MP104C), this protein is ATP synthase subunit alpha.